A 126-amino-acid polypeptide reads, in one-letter code: Histone H2B type 1-K (126 aa).

Residues 1-12 are compositionally biased toward low complexity; sequence MPEPAKSAPAPK. Positions 1–36 are disordered; it reads MPEPAKSAPAPKKGSKKAVTKAQKKDGKKRKRSRKE. The residue at position 2 (proline 2) is an N-acetylproline. An ADP-ribosyl glutamic acid modification is found at glutamate 3. An N6-(2-hydroxyisobutyryl)lysine; alternate modification is found at lysine 6. At lysine 6 the chain carries N6-(beta-hydroxybutyryl)lysine; alternate. Lysine 6 is subject to N6-acetyllysine; alternate. N6-butyryllysine; alternate is present on lysine 6. Lysine 6 is modified (N6-crotonyllysine; alternate). Lysine 6 carries the post-translational modification N6-lactoyllysine; alternate. Lysine 6 is covalently cross-linked (Glycyl lysine isopeptide (Lys-Gly) (interchain with G-Cter in SUMO2); alternate). Serine 7 is modified (ADP-ribosylserine). Lysine 12 carries the post-translational modification N6-(beta-hydroxybutyryl)lysine; alternate. N6-acetyllysine; alternate occurs at positions 12 and 13. Residues lysine 12 and lysine 13 each carry the N6-crotonyllysine; alternate modification. The residue at position 12 (lysine 12) is an N6-lactoyllysine; alternate. Lysine 13 is modified (N6-(2-hydroxyisobutyryl)lysine; alternate). Residue serine 15 is modified to Phosphoserine; by STK4/MST1. Lysine 16, lysine 17, lysine 21, and lysine 24 each carry N6-acetyllysine; alternate. An N6-crotonyllysine; alternate mark is found at lysine 16, lysine 17, lysine 21, and lysine 24. N6-lactoyllysine; alternate occurs at positions 16, 17, 21, and 24. Lysine 17 and lysine 21 each carry N6-(beta-hydroxybutyryl)lysine; alternate. Residue lysine 17 is modified to N6-glutaryllysine; alternate. Residues lysine 21 and lysine 24 each carry the N6-(2-hydroxyisobutyryl)lysine; alternate modification. Lysine 21 carries the post-translational modification N6-butyryllysine; alternate. Lysine 21 is covalently cross-linked (Glycyl lysine isopeptide (Lys-Gly) (interchain with G-Cter in SUMO2); alternate). The residue at position 25 (lysine 25) is an N6-(2-hydroxyisobutyryl)lysine. Residue lysine 35 is modified to N6-(2-hydroxyisobutyryl)lysine; alternate. Lysine 35 is modified (N6-(beta-hydroxybutyryl)lysine; alternate). Lysine 35 bears the N6-crotonyllysine; alternate mark. Lysine 35 is modified (N6-glutaryllysine; alternate). Lysine 35 carries the N6-succinyllysine; alternate modification. A Glycyl lysine isopeptide (Lys-Gly) (interchain with G-Cter in ubiquitin); alternate cross-link involves residue lysine 35. Glutamate 36 is modified (polyADP-ribosyl glutamic acid). Serine 37 carries the post-translational modification Phosphoserine; by AMPK. Residues lysine 44, lysine 47, and lysine 58 each carry the N6-(2-hydroxyisobutyryl)lysine; alternate modification. N6-lactoyllysine; alternate is present on lysine 44. 2 positions are modified to N6-glutaryllysine; alternate: lysine 44 and lysine 47. At lysine 47 the chain carries N6-methyllysine; alternate. Lysine 58 bears the N6,N6-dimethyllysine; alternate mark. At arginine 80 the chain carries Dimethylated arginine. Lysine 86 carries the post-translational modification N6-(2-hydroxyisobutyryl)lysine; alternate. The residue at position 86 (lysine 86) is an N6-(beta-hydroxybutyryl)lysine; alternate. Lysine 86 is subject to N6-acetyllysine; alternate. Lysine 86 is subject to N6-lactoyllysine; alternate. Position 86 is an N6,N6,N6-trimethyllysine; alternate (lysine 86). Residues arginine 87 and arginine 93 each carry the omega-N-methylarginine modification. Lysine 109 is modified (N6-(2-hydroxyisobutyryl)lysine; alternate). Position 109 is an N6-lactoyllysine; alternate (lysine 109). At lysine 109 the chain carries N6-glutaryllysine; alternate. Lysine 109 is subject to N6-methyllysine; alternate. Serine 113 is a glycosylation site (O-linked (GlcNAc) serine). A Phosphothreonine modification is found at threonine 116. Lysine 117 and lysine 121 each carry N6-(2-hydroxyisobutyryl)lysine; alternate. 2 positions are modified to N6-(beta-hydroxybutyryl)lysine; alternate: lysine 117 and lysine 121. Residues lysine 117 and lysine 121 each carry the N6-lactoyllysine; alternate modification. An N6-glutaryllysine; alternate mark is found at lysine 117 and lysine 121. Lysine 117 and lysine 121 each carry N6-succinyllysine; alternate. An N6-malonyllysine; alternate modification is found at lysine 117. Lysine 117 bears the N6-methylated lysine; alternate mark. Lysine 121 is covalently cross-linked (Glycyl lysine isopeptide (Lys-Gly) (interchain with G-Cter in ubiquitin); alternate).

This sequence belongs to the histone H2B family. The nucleosome is a histone octamer containing two molecules each of H2A, H2B, H3 and H4 assembled in one H3-H4 heterotetramer and two H2A-H2B heterodimers. The octamer wraps approximately 147 bp of DNA. Monoubiquitination at Lys-35 (H2BK34Ub) by the MSL1/MSL2 dimer is required for histone H3 'Lys-4' (H3K4me) and 'Lys-79' (H3K79me) methylation and transcription activation at specific gene loci, such as HOXA9 and MEIS1 loci. Similarly, monoubiquitination at Lys-121 (H2BK120Ub) by the RNF20/40 complex gives a specific tag for epigenetic transcriptional activation and is also prerequisite for histone H3 'Lys-4' and 'Lys-79' methylation. It also functions cooperatively with the FACT dimer to stimulate elongation by RNA polymerase II. H2BK120Ub also acts as a regulator of mRNA splicing: deubiquitination by USP49 is required for efficient cotranscriptional splicing of a large set of exons. Post-translationally, phosphorylation at Ser-37 (H2BS36ph) by AMPK in response to stress promotes transcription. Phosphorylated on Ser-15 (H2BS14ph) by STK4/MST1 during apoptosis; which facilitates apoptotic chromatin condensation. Also phosphorylated on Ser-15 in response to DNA double strand breaks (DSBs), and in correlation with somatic hypermutation and immunoglobulin class-switch recombination. In terms of processing, glcNAcylation at Ser-113 promotes monoubiquitination of Lys-121. It fluctuates in response to extracellular glucose, and associates with transcribed genes. ADP-ribosylated by PARP1 or PARP2 on Ser-7 (H2BS6ADPr) in response to DNA damage. H2BS6ADPr promotes recruitment of CHD1L. Mono-ADP-ribosylated on Glu-3 (H2BE2ADPr) by PARP3 in response to single-strand breaks. Poly ADP-ribosylation on Glu-36 (H2BE35ADPr) by PARP1 regulates adipogenesis: it inhibits phosphorylation at Ser-37 (H2BS36ph), thereby blocking expression of pro-adipogenetic genes. Post-translationally, crotonylation (Kcr) is specifically present in male germ cells and marks testis-specific genes in post-meiotic cells, including X-linked genes that escape sex chromosome inactivation in haploid cells. Crotonylation marks active promoters and enhancers and confers resistance to transcriptional repressors. It is also associated with post-meiotically activated genes on autosomes. In terms of processing, lactylated in macrophages by EP300/P300 by using lactoyl-CoA directly derived from endogenous or exogenous lactate, leading to stimulates gene transcription.

The protein resides in the nucleus. It is found in the chromosome. Core component of nucleosome. Nucleosomes wrap and compact DNA into chromatin, limiting DNA accessibility to the cellular machineries which require DNA as a template. Histones thereby play a central role in transcription regulation, DNA repair, DNA replication and chromosomal stability. DNA accessibility is regulated via a complex set of post-translational modifications of histones, also called histone code, and nucleosome remodeling. Functionally, has broad antibacterial activity. May contribute to the formation of the functional antimicrobial barrier of the colonic epithelium, and to the bactericidal activity of amniotic fluid. In Homo sapiens (Human), this protein is Histone H2B type 1-K.